We begin with the raw amino-acid sequence, 92 residues long: Small ribosomal subunit protein uS19 (92 aa).

Belongs to the universal ribosomal protein uS19 family.

Its function is as follows. Protein S19 forms a complex with S13 that binds strongly to the 16S ribosomal RNA. This is Small ribosomal subunit protein uS19 from Shewanella halifaxensis (strain HAW-EB4).